Reading from the N-terminus, the 1121-residue chain is Piwi-like protein ergo-1 (1121 aa).

The segment covering Met1–Tyr14 has biased composition (gly residues). The tract at residues Met1–Val134 is disordered. Composition is skewed to basic and acidic residues over residues Arg15–Asn29 and Tyr40–Gly77. Polar residues predominate over residues Gly99–Gly112. Positions Gly125 to Val134 are enriched in gly residues. Residues Val426 to Val534 enclose the PAZ domain. Positions Asn774–Asp1081 constitute a Piwi domain.

It belongs to the argonaute family. Piwi subfamily. As to quaternary structure, interacts with rde-12. Interacts with rde-10. In terms of tissue distribution, highly expressed in the germline in hermaphrodites.

The protein resides in the cytoplasm. Functionally, argonaute protein required for gene silencing in the endogenous RNA interference (RNAi) pathway. Involved in the 26G RNAi pathway and associates with both unmethylated and methylated 26G small interfering RNAs (26G-siRNAs), which are a class of 26 nucleotide siRNAs that possess a guanine residue at the 5'-end. Associated 26G-siRNAs are methylated by the methyltransferase henn-1, which stabilizes the siRNAs. Association with 26G-siRNAs is required for the biogenesis of secondary 22G-siRNAs (a class of 22 nucleotide siRNAs that possess a triphosphorylated guanine residue at the 5'-end). May be involved in passenger strand cleavage of target 26G-siRNAs. The chain is Piwi-like protein ergo-1 from Caenorhabditis elegans.